The primary structure comprises 144 residues: Actin-associated protein FAM107A (144 aa).

The stretch at 67-94 (LQRVLEHRRRNQLIKKKKEELEAKRLQC) forms a coiled coil. A Nuclear localization signal motif is present at residues 74–84 (RRRNQLIKKKK). Residues 105 to 124 (QRLNQLEKPPEKEEDHAPEF) are disordered. Positions 112-124 (KPPEKEEDHAPEF) are enriched in basic and acidic residues.

It belongs to the FAM107 family. In terms of assembly, interacts with ACTB. Interacts with COMMD1; this interaction stabilizes COMMD1 in the nucleus. Interacts with MAP1A. Interacts with PRDX1. Interacts with F-actin.

The protein resides in the nucleus. Its subcellular location is the cytoplasm. The protein localises to the cytoskeleton. It is found in the stress fiber. It localises to the cell junction. The protein resides in the focal adhesion. Its subcellular location is the cell projection. The protein localises to the ruffle membrane. It is found in the synapse. In terms of biological role, stress-inducible actin-binding protein that plays a role in synaptic and cognitive functions by modulating actin filamentous (F-actin) dynamics. Mediates polymerization of globular actin to F-actin. Also binds to, stabilizes and bundles F-actin. Involved in synaptic function by regulating neurite outgrowth in an actin-dependent manner and for the acquisition of hippocampus-dependent cognitive function, such as learning and long-term memory. Plays a role in the actin and microtubule cytoskeleton organization; negatively regulates focal adhesion (FA) assembly promoting malignant glial cell migration in an actin-, microtubule- and MAP1A-dependent manner. Also involved in neuroblastoma G1/S phase cell cycle progression and cell proliferation inhibition by stimulating ubiquitination of NF-kappa-B subunit RELA and NF-kappa-B degradation in a COMMD1- and actin-dependent manner. May play a role in tumor development. This Pan troglodytes (Chimpanzee) protein is Actin-associated protein FAM107A (FAM107A).